Reading from the N-terminus, the 306-residue chain is MNNNYHTQINRPNMLNEIAANNNLLNNKNNQTNQLNNNQYNNQYNNQNNNQNYPQNYPQNSQQNFQQNSQQNHQQNYQQNYPQKFPHQQNNITEDLVDIELSDSKESGSEYPQSVQQTHQQPIQNNPSIPNNQPNQINQYNQQPNQYNHQQPNQFTQNQPNQPNQPNQHNQYSQHNQPNQSNQPNQYNQNNQFAQPNQYNQSGQLNHTNKINKQIQKQLDKNQPEKIPSKPEKNQKQSHKPKLPPTMQHGPLPIHGMPIQHMPPQLPMQTEYCKKSNSLFDYIIIPIALVLVFLFLVHPKTFQNNW.

Residues asparagine 13–glutamine 39 are a coiled coil. Disordered stretches follow at residues tyrosine 44 to asparagine 76, aspartate 103 to glutamine 204, and glutamine 216 to histidine 249. Residues histidine 119–glutamine 201 show a composition bias toward low complexity. The segment covering glutamine 218 to glutamine 235 has biased composition (basic and acidic residues). Residues leucine 279 to proline 299 form a helical membrane-spanning segment.

The protein resides in the membrane. This is an uncharacterized protein from Acanthamoeba polyphaga mimivirus (APMV).